The sequence spans 410 residues: 2-epi-5-epi-valiolone synthase (410 aa).

NAD(+)-binding positions include Asp-66, 97-100 (ETLK), 130-134 (GVLMD), 154-155 (TT), Lys-167, Lys-176, and 194-197 (FLAT). Lys-167 is an active-site residue. Residues Glu-209, His-280, and His-296 each coordinate a divalent metal cation.

Belongs to the sugar phosphate cyclases superfamily. EEVS family. Requires NAD(+) as cofactor. The cofactor is Co(2+).

The enzyme catalyses D-sedoheptulose 7-phosphate = 2-epi-5-epi-valiolone + phosphate. Functionally, catalyzes the cyclization of D-sedoheptulose 7-phosphate to 2-epi-5-epi-valiolone. Involved in salbostatin biosynthesis. The sequence is that of 2-epi-5-epi-valiolone synthase from Streptomyces albus (strain ATCC 21838 / DSM 41398 / FERM P-419 / JCM 4703 / NBRC 107858).